A 113-amino-acid polypeptide reads, in one-letter code: Small ribosomal subunit protein uS17 (113 aa).

It belongs to the universal ribosomal protein uS17 family. As to quaternary structure, part of the 30S ribosomal subunit.

Functionally, one of the primary rRNA binding proteins, it binds specifically to the 5'-end of 16S ribosomal RNA. The protein is Small ribosomal subunit protein uS17 of Pyrococcus abyssi (strain GE5 / Orsay).